A 660-amino-acid chain; its full sequence is Kinesin-like protein KIF2A (660 aa).

Residues Met1 to Gln140 are disordered. The interval Met1–Asp171 is globular. Ser48 carries the post-translational modification Phosphoserine. 2 positions are modified to phosphothreonine: Thr51 and Thr70. Ser73 is modified (phosphoserine). Position 75 is an N6-acetyllysine (Lys75). Positions Leu96–Asn106 are enriched in polar residues. A compositionally biased stretch (basic and acidic residues) spans Cys113–Gln140. The 331-residue stretch at Arg177–Leu507 folds into the Kinesin motor domain. Gly267 to Thr274 serves as a coordination point for ATP. Positions Ala614 to Asn653 form a coiled coil.

It belongs to the TRAFAC class myosin-kinesin ATPase superfamily. Kinesin family. MCAK/KIF2 subfamily. As to quaternary structure, interacts with AURKA and PLK1. Interacts with PSRC1. Interacts with MCRS1; the interaction enhances recruitment of KIF2A to the minus ends of spindle microtubules which promotes chromosome alignment.

It localises to the cytoplasm. The protein localises to the cytoskeleton. It is found in the microtubule organizing center. The protein resides in the centrosome. Its subcellular location is the spindle pole. It localises to the spindle. Functionally, plus end-directed microtubule-dependent motor required for normal brain development. May regulate microtubule dynamics during axonal growth. Required for normal progression through mitosis. Required for normal congress of chromosomes at the metaphase plate. Required for normal spindle dynamics during mitosis. Promotes spindle turnover. Implicated in formation of bipolar mitotic spindles. Has microtubule depolymerization activity. The chain is Kinesin-like protein KIF2A (KIF2A) from Bos taurus (Bovine).